A 100-amino-acid chain; its full sequence is Small ribosomal subunit protein uS14c (100 aa).

It belongs to the universal ribosomal protein uS14 family. In terms of assembly, part of the 30S ribosomal subunit.

The protein localises to the plastid. It is found in the chloroplast. In terms of biological role, binds 16S rRNA, required for the assembly of 30S particles. This chain is Small ribosomal subunit protein uS14c, found in Liriodendron tulipifera (Tuliptree).